The primary structure comprises 480 residues: RuvB-like helicase 2 (480 aa).

Position 76–83 (76–83 (GPPSTGKT)) interacts with ATP.

This sequence belongs to the RuvB family. May form heterododecamers with RVB1. Component of the SWR1 chromatin remodeling complex, the INO80 chromatin remodeling complex, and of the R2TP complex.

It is found in the nucleus. It catalyses the reaction ATP + H2O = ADP + phosphate + H(+). DNA helicase which participates in several chromatin remodeling complexes, including the SWR1 and the INO80 complexes. The SWR1 complex mediates the ATP-dependent exchange of histone H2A for the H2A variant HZT1 leading to transcriptional regulation of selected genes by chromatin remodeling. The INO80 complex remodels chromatin by shifting nucleosomes and is involved in DNA repair. Also involved in pre-rRNA processing. The protein is RuvB-like helicase 2 (RVB2) of Debaryomyces hansenii (strain ATCC 36239 / CBS 767 / BCRC 21394 / JCM 1990 / NBRC 0083 / IGC 2968) (Yeast).